Consider the following 314-residue polypeptide: Olfactory receptor 14K1 (314 aa).

The Extracellular segment spans residues 1-23; the sequence is MTNQTQMMEFLLVRFTENWVLLR. N-linked (GlcNAc...) asparagine glycosylation occurs at N3. A helical transmembrane segment spans residues 24–44; that stretch reads LHALLFSLIYLTAVLMNLVII. The Cytoplasmic segment spans residues 45–52; it reads LLMILDHR. A helical transmembrane segment spans residues 53–73; that stretch reads LHMAMYFFLRHLSFLDLCLIS. At 74–97 the chain is on the extracellular side; it reads ATVPKSILNSVASTDSISFLGCVL. A disulfide bridge links C95 with C187. Residues 98–118 form a helical membrane-spanning segment; that stretch reads QLFLVVLLAGSEIGILTAMSY. Residues 119-131 lie on the Cytoplasmic side of the membrane; it reads DRYAAICCPLHCE. Residues 132-152 form a helical membrane-spanning segment; sequence AVMSRGLCVQLMALSWLNRGA. Residues 153-194 are Extracellular-facing; the sequence is LGLLYTAGTFSLNFYGSDELHQFFCDVPALLKLTCSKEHAII. Residues 195–215 traverse the membrane as a helical segment; the sequence is SVSVAIGVCYAFSCLVCIVVS. The Cytoplasmic portion of the chain corresponds to 216-235; that stretch reads YVYIFSAVLRISQRQRQSKA. The helical transmembrane segment at 236–256 threads the bilayer; the sequence is FSNCVPHLIVVTVFLVTGAVA. Over 257–269 the chain is Extracellular; the sequence is YLKPGSDAPSILD. Residues 270-290 traverse the membrane as a helical segment; it reads LLVSVFYSVAPPTLNPVIYCL. Residues 291 to 314 lie on the Cytoplasmic side of the membrane; it reads KNKDIKSALSKVLWNVRSSGVMKR.

It belongs to the G-protein coupled receptor 1 family.

It localises to the cell membrane. Odorant receptor. This is Olfactory receptor 14K1 (OR14K1) from Homo sapiens (Human).